Here is a 322-residue protein sequence, read N- to C-terminus: Sideroflexin fsf1 (322 aa).

4 consecutive transmembrane segments (helical) span residues serine 143–proline 163, valine 175–leucine 195, threonine 229–methionine 249, and leucine 269–alanine 289.

This sequence belongs to the sideroflexin family.

It is found in the mitochondrion membrane. Functionally, mitochondrial amino-acid transporter that mediates transport of serine into mitochondria. This Schizosaccharomyces pombe (strain 972 / ATCC 24843) (Fission yeast) protein is Sideroflexin fsf1.